The following is a 474-amino-acid chain: NAD(P) transhydrogenase subunit beta (474 aa).

The next 9 membrane-spanning stretches (helical) occupy residues 4-24, 46-66, 83-103, 132-152, 181-200, 202-222, 229-249, 253-273, and 321-341; these read GLVQ…LAGL, IATI…AMII, MPEL…LVGF, VLTN…AVTF, LAAL…NPES, FPVL…VASI, VVVS…GFIL, LLIV…YIMC, and VIIT…VADI.

It belongs to the PNT beta subunit family. In terms of assembly, heterodimer of an alpha and a beta chain.

It localises to the cell inner membrane. The catalysed reaction is NAD(+) + NADPH + H(+)(in) = NADH + NADP(+) + H(+)(out). The transhydrogenation between NADH and NADP is coupled to respiration and ATP hydrolysis and functions as a proton pump across the membrane. The protein is NAD(P) transhydrogenase subunit beta (pntB) of Haemophilus influenzae (strain ATCC 51907 / DSM 11121 / KW20 / Rd).